Reading from the N-terminus, the 200-residue chain is Peptidyl-tRNA hydrolase (200 aa).

Residue tyrosine 15 participates in tRNA binding. The Proton acceptor role is filled by histidine 20. TRNA is bound by residues phenylalanine 66, asparagine 68, and asparagine 114.

This sequence belongs to the PTH family. In terms of assembly, monomer.

Its subcellular location is the cytoplasm. The catalysed reaction is an N-acyl-L-alpha-aminoacyl-tRNA + H2O = an N-acyl-L-amino acid + a tRNA + H(+). Hydrolyzes ribosome-free peptidyl-tRNAs (with 1 or more amino acids incorporated), which drop off the ribosome during protein synthesis, or as a result of ribosome stalling. Functionally, catalyzes the release of premature peptidyl moieties from peptidyl-tRNA molecules trapped in stalled 50S ribosomal subunits, and thus maintains levels of free tRNAs and 50S ribosomes. This is Peptidyl-tRNA hydrolase from Ralstonia pickettii (strain 12J).